Reading from the N-terminus, the 481-residue chain is UDP-glycosyltransferase 72E3 (481 aa).

The active-site Proton acceptor is His-18. His-18 provides a ligand contact to an anthocyanidin. The active-site Charge relay is the Asp-111. The UDP-alpha-D-glucose site is built by Ala-346, Gln-348, His-363, Trp-366, Ser-368, and Glu-371. Residue Ala-386 coordinates an anthocyanidin. UDP-alpha-D-glucose-binding residues include Glu-387 and Gln-388.

The protein belongs to the UDP-glycosyltransferase family. In terms of tissue distribution, expressed in seedlings and roots, and at lower levels in flowers and siliques.

The catalysed reaction is (E)-4-coumarate + UDP-alpha-D-glucose = 4-O-(beta-D-glucosyl)-trans-4-coumarate + UDP + H(+). The enzyme catalyses (E)-sinapyl alcohol + UDP-alpha-D-glucose = 4-O-(beta-D-glucosyl)-trans-4-sinapoyl alcohol + UDP + H(+). It catalyses the reaction (E)-coniferol + UDP-alpha-D-glucose = 4-O-(beta-D-glucosyl)-(E)-coniferol + UDP + H(+). It carries out the reaction (E)-sinapate + UDP-alpha-D-glucose = 4-O-(beta-D-glucosyl)-trans-sinapate + UDP + H(+). The catalysed reaction is (E)-coniferaldehyde + UDP-alpha-D-glucose = 4-O-(beta-D-glucosyl)-4-(E)-coniferyl aldehyde + UDP + H(+). The enzyme catalyses (E)-sinapaldehyde + UDP-alpha-D-glucose = 4-O-(beta-D-glucosyl)-4-trans-sinapoyl aldehyde + UDP + H(+). In terms of biological role, involved in the O-glucosylation of monolignols (alcohol monomers of lignin). Glucosylates coniferyl alcohol to form coniferyl alcohol 4-O-glucoside. Glucosylates sinapyl alcohol to form sinapyl alcohol 4-O-glucoside. Possesses low activity with sinapate as substrate. This is UDP-glycosyltransferase 72E3 from Arabidopsis thaliana (Mouse-ear cress).